Here is an 883-residue protein sequence, read N- to C-terminus: Putative pentatricopeptide repeat-containing protein At1g13800 (883 aa).

PPR repeat units follow at residues 145 to 180 (LIRV…GRAP), 181 to 215 (DIKA…GLDA), 216 to 251 (DAHT…TRNP), 253 to 285 (VFYL…NILV), 290 to 324 (LGIA…GIDP), 325 to 359 (DVYV…RKRI), 360 to 394 (NCVI…NISL), 395 to 429 (DRVC…GIAP), 430 to 464 (DVIN…GKTP), 465 to 499 (DIVI…GVKP), 500 to 534 (TYVT…SREN), 537 to 561 (SMVK…LEFP), 563 to 598 (PKSV…GVEP), 599 to 633 (EKSM…KIVP), 634 to 668 (DLFT…DVKP), 697 to 731 (DVVY…EIVP), 760 to 794 (DVFY…GVDP), 795 to 829 (DAAP…GVKP), and 830 to 864 (DVVP…GIKP).

This sequence belongs to the PPR family. P subfamily.

The polypeptide is Putative pentatricopeptide repeat-containing protein At1g13800 (Arabidopsis thaliana (Mouse-ear cress)).